The following is a 131-amino-acid chain: Fumarate reductase subunit C (131 aa).

3 consecutive transmembrane segments (helical) span residues 30–50 (EGTA…LFAL), 63–83 (FLQN…ALLH), and 109–129 (IIKS…FVAL).

The protein belongs to the FrdC family. As to quaternary structure, part of an enzyme complex containing four subunits: a flavoprotein (FrdA), an iron-sulfur protein (FrdB), and two hydrophobic anchor proteins (FrdC and FrdD).

The protein resides in the cell inner membrane. Its function is as follows. Two distinct, membrane-bound, FAD-containing enzymes are responsible for the catalysis of fumarate and succinate interconversion; fumarate reductase is used in anaerobic growth, and succinate dehydrogenase is used in aerobic growth. Anchors the catalytic components of the fumarate reductase complex to the cell inner membrane, binds quinones. The protein is Fumarate reductase subunit C of Shigella boydii serotype 18 (strain CDC 3083-94 / BS512).